The primary structure comprises 608 residues: tRNA (guanine(37)-N(1))-methyltransferase 1 (608 aa).

The segment at 207–229 (SRPKKKKRRKEEERSEGKKRTGK) is disordered. The span at 216–229 (KEEERSEGKKRTGK) shows a compositional bias: basic and acidic residues. Residues Arg425, 463 to 464 (DL), 491 to 492 (DG), and Asn514 each bind S-adenosyl-L-methionine.

The protein belongs to the class I-like SAM-binding methyltransferase superfamily. TRM5/TYW2 family. In terms of assembly, monomer.

It localises to the mitochondrion matrix. It is found in the nucleus. The protein resides in the cytoplasm. It carries out the reaction guanosine(37) in tRNA + S-adenosyl-L-methionine = N(1)-methylguanosine(37) in tRNA + S-adenosyl-L-homocysteine + H(+). In terms of biological role, specifically methylates the N1 position of guanosine-37 in various cytoplasmic and mitochondrial tRNAs. Methylation is not dependent on the nature of the nucleoside 5' of the target nucleoside. This is the first step in the biosynthesis of wybutosine (yW), a modified base adjacent to the anticodon of tRNAs and required for accurate decoding. The chain is tRNA (guanine(37)-N(1))-methyltransferase 1 from Vitis vinifera (Grape).